The chain runs to 484 residues: SPI-2 type 3 secretion system translocon protein SctE (484 aa).

The next 2 membrane-spanning stretches (helical) occupy residues 85–105 (FLQTNPAVLSMMMTSLILNVF) and 152–172 (GIFGAIFDWITGIFETVIGAL). Coiled coils occupy residues 107–152 (NNAQ…RKAG) and 413–457 (NTEK…LYKG).

It belongs to the SctE/SipB/YopB family. In terms of assembly, the core secretion machinery of the T3SS is composed of approximately 20 different proteins, including cytoplasmic components, a base, an export apparatus and a needle. This subunit is involved in the formation of a pore, called the translocon, in host membrane. May form a complex with SseB and SseD/SctB2. SseB is required for correct localization of SseC/SctE2 on the bacterial cell surface.

Its subcellular location is the secreted. It localises to the cell surface. The protein localises to the host membrane. Component of the type III secretion system 2 (SPI-2 T3SS), also called injectisome, which is used to inject bacterial effector proteins into eukaryotic host cells. SseC/SctE2 and SseD/SctB2 are inserted into the host membrane where they form a pore and allow the translocation of effector proteins into the cytosol of target cells. Its function is as follows. Required for the translocation of SPI-2 effector proteins. Required for systemic Salmonella infection of the mouse. Essential for SpvB-induced actin depolymerization in the host cell cytoplasm. This chain is SPI-2 type 3 secretion system translocon protein SctE, found in Salmonella typhimurium (strain LT2 / SGSC1412 / ATCC 700720).